We begin with the raw amino-acid sequence, 155 residues long: RNA pyrophosphohydrolase (155 aa).

The 143-residue stretch at 6–148 (GYRANVAIVL…KQEVYRKALT (143 aa)) folds into the Nudix hydrolase domain. Positions 38-59 (GGVATGETPLQAMYRELHEEIG) match the Nudix box motif.

The protein belongs to the Nudix hydrolase family. RppH subfamily. It depends on a divalent metal cation as a cofactor.

In terms of biological role, accelerates the degradation of transcripts by removing pyrophosphate from the 5'-end of triphosphorylated RNA, leading to a more labile monophosphorylated state that can stimulate subsequent ribonuclease cleavage. The chain is RNA pyrophosphohydrolase from Francisella tularensis subsp. tularensis (strain FSC 198).